The following is a 466-amino-acid chain: Tryptophan synthase beta chain 2, chloroplastic (466 aa).

At K161 the chain carries N6-(pyridoxal phosphate)lysine.

The protein belongs to the TrpB family. As to quaternary structure, tetramer of two alpha and two beta chains. Pyridoxal 5'-phosphate is required as a cofactor.

The protein localises to the plastid. The protein resides in the chloroplast. The enzyme catalyses (1S,2R)-1-C-(indol-3-yl)glycerol 3-phosphate + L-serine = D-glyceraldehyde 3-phosphate + L-tryptophan + H2O. The protein operates within amino-acid biosynthesis; L-tryptophan biosynthesis; L-tryptophan from chorismate: step 5/5. Its function is as follows. The beta subunit is responsible for the synthesis of L-tryptophan from indole and L-serine. This Camptotheca acuminata (Happy tree) protein is Tryptophan synthase beta chain 2, chloroplastic (TSB).